The primary structure comprises 722 residues: MQGQTKSVSFDGREIKLTTGRFAPQAGGSVMIECGDTSVLVTATKSSGREGVDFLPLMCDYEERLYAAGRIPGSFMRREGRPPERATLISRLIDRPMRPLFPGWMRDDIQIVATCLSLDERVPADVLAVTGASMATLMAGIPFQGPMAAVRVGLLGDDFVLNPSYREIERGDLDLVVAGTPDGVVMVEAGANQLSEQDVIEAIDFGYEAITELINAQKEVLKESGIKQEMPKAPEIDDTISTYLDKNCTKSISEVLKNFDQTKEERDNKIEEIKISISAKIDGLKDDNAVKKSLSLNNKLLENSYKALTKKLMREQIIKEGKRVDGRELNEVRAIDADAAVLPNRVHGSALFQRGLTQVLSTATLGTPSDAQEMDDLNPNTDKTYIHHYNFPPYSVGETRPMRTPGRREVGHGALAERALIPVLPAKDTFPYVLRVVSEVLSSNGSTSMASVCGSTLALMDAGVPLKAPVGGAAMGLIKEGKEVRILTDIQGIEDFLGDMDFKVAGTEKGITALQMDMKITGLPIETIGEAINQALPARTHILGKMLDAIETPKDNLSPHAPRLLSFRIDPELIGTVIGPGGRTIKGITERTNTKIDIEDGGIVTIASHDGAAAEEAQRIIEGLTRKVHEGEIFPGSITRIIPIGAFVEILPGKEGMIHISQLSEARVEKVEDVVKVGDQVTVRVREIDNRGRINLTLRGVSQNGGMSNYPEPTPTPVAPLT.

Residues Asp495 and Asp501 each contribute to the Mg(2+) site. Residues 562–621 form the KH domain; sequence PRLLSFRIDPELIGTVIGPGGRTIKGITERTNTKIDIEDGGIVTIASHDGAAAEEAQRII. An S1 motif domain is found at 631–699; that stretch reads GEIFPGSITR…NRGRINLTLR (69 aa). Residues 700–722 are disordered; sequence GVSQNGGMSNYPEPTPTPVAPLT. Positions 712–722 are enriched in pro residues; sequence EPTPTPVAPLT.

Belongs to the polyribonucleotide nucleotidyltransferase family. Mg(2+) is required as a cofactor.

Its subcellular location is the cytoplasm. It carries out the reaction RNA(n+1) + phosphate = RNA(n) + a ribonucleoside 5'-diphosphate. Its function is as follows. Involved in mRNA degradation. Catalyzes the phosphorolysis of single-stranded polyribonucleotides processively in the 3'- to 5'-direction. The chain is Polyribonucleotide nucleotidyltransferase from Prochlorococcus marinus (strain NATL2A).